A 411-amino-acid polypeptide reads, in one-letter code: 2,3-bisphosphoglycerate-independent phosphoglycerate mutase (411 aa).

This sequence belongs to the BPG-independent phosphoglycerate mutase family. A-PGAM subfamily.

It carries out the reaction (2R)-2-phosphoglycerate = (2R)-3-phosphoglycerate. The protein operates within carbohydrate degradation; glycolysis; pyruvate from D-glyceraldehyde 3-phosphate: step 3/5. Its function is as follows. Catalyzes the interconversion of 2-phosphoglycerate and 3-phosphoglycerate. The protein is 2,3-bisphosphoglycerate-independent phosphoglycerate mutase of Methanosphaerula palustris (strain ATCC BAA-1556 / DSM 19958 / E1-9c).